The primary structure comprises 1259 residues: uncharacterized protein (1259 aa).

Residues 354-410 (KLNQAGGKRNSSMNNSTQNNNSSRSNNSARNNNSVWNNNNSAWKNNNSAWNDNSSWK) form a disordered region. The span at 362–410 (RNSSMNNSTQNNNSSRSNNSARNNNSVWNNNNSAWKNNNSAWNDNSSWK) shows a compositional bias: low complexity.

It localises to the virion. This is an uncharacterized protein from Acanthamoeba polyphaga (Amoeba).